Here is a 111-residue protein sequence, read N- to C-terminus: uncharacterized protein (111 aa).

Helical transmembrane passes span 4-22 (FWIL…QFFI), 49-71 (LLIL…LFFI), and 91-108 (YMYH…LIYV).

It is found in the cell membrane. This is an uncharacterized protein from Bacillus subtilis (strain 168).